Reading from the N-terminus, the 275-residue chain is Pyridoxal phosphate homeostasis protein (275 aa).

At serine 6 the chain carries Phosphoserine. Lysine 47 carries the post-translational modification N6-(pyridoxal phosphate)lysine. Tyrosine 69 bears the Phosphotyrosine mark. Lysine 125 bears the N6-succinyllysine mark. 2 positions are modified to phosphoserine: serine 226 and serine 244. Basic and acidic residues predominate over residues 251-263; it reads DYSKKPTPDKCAA. Residues 251 to 275 form a disordered region; the sequence is DYSKKPTPDKCAADVKAPLEVAQEH.

Belongs to the pyridoxal phosphate-binding protein YggS/PROSC family. Ubiquitous.

In terms of biological role, pyridoxal 5'-phosphate (PLP)-binding protein, which may be involved in intracellular homeostatic regulation of pyridoxal 5'-phosphate (PLP), the active form of vitamin B6. The polypeptide is Pyridoxal phosphate homeostasis protein (Homo sapiens (Human)).